Reading from the N-terminus, the 119-residue chain is uncharacterized protein (119 aa).

Positions 1-29 form a coiled coil; the sequence is MKKVGEEEIKQEENEKEKIVKKLNESDVK.

This is an uncharacterized protein from Acidianus sp. F28 (AFV-2).